The chain runs to 108 residues: MDKKDLFDAFDDFSQNLLVGLSEIETMKKQIQKLLEENTVLRIENGKLRERLSVIEAETETAVKNSKQGRELLEGIYNDGFHICNTFYGQRRENDEECAFCIELLYRD.

Histidine 82, cysteine 84, cysteine 98, and cysteine 101 together coordinate Zn(2+).

This sequence belongs to the YabA family. As to quaternary structure, homotetramer. Interacts with both DnaA and DnaN, acting as a bridge between these two proteins. The cofactor is Zn(2+).

The protein localises to the cytoplasm. It localises to the nucleoid. Its function is as follows. Involved in control of chromosome replication initiation. Inhibits the cooperative binding of DnaA to the oriC region, thus negatively regulating initiation of chromosome replication. Inhibits the ability of DnaA-ATP to form a helix on DNA; does not disassemble preformed DnaA-DNA helices. Decreases the residence time of DnaA on the chromosome at its binding sites (oriC, replication forks and promoter-binding sites). Tethers DnaA to the replication machinery via the DNA polymerase beta sliding clamp subunit (dnaN). Associates with oriC and other DnaA targets on the chromosome in a DnaA-dependent manner. The chain is Replication initiation control protein YabA from Streptococcus agalactiae serotype Ia (strain ATCC 27591 / A909 / CDC SS700).